A 46-amino-acid chain; its full sequence is AQLADSFHLQQFFRSQLLGSAHEVQRLAQFVEHWKKVEDLFLTFAK.

6 Spectrin repeats span residues 1–5, 7–14, 15–20, 21–26, 27–35, and 39–46; these read AQLAD, FHLQQFFR, SQLLGS, AHEVQR, LAQFVEHWK, and DLFLTFAK.

This sequence belongs to the spectrin family. As to quaternary structure, associates with the gamma-tubulin complex in brain, but not in kidney, liver, sperm, or uterus. Like erythrocyte spectrin, the spectrin-like proteins are capable of forming dimers which can further associate to tetramers. Interacts with isoform 1 of ACP1. Interacts with CALM and EMD. Interacts (via C-terminal spectrin repeats) with TRPC4. Identified in a complex with ACTN4, CASK, IQGAP1, MAGI2, NPHS1 and SPTBN1. Interacts with CLN3; this interaction regulates the fodrin localization at the plasma membrane.

The protein resides in the cytoplasm. It localises to the cytoskeleton. It is found in the cell cortex. In terms of biological role, fodrin, which seems to be involved in secretion, interacts with calmodulin in a calcium-dependent manner and is thus candidate for the calcium-dependent movement of the cytoskeleton at the membrane. This is Spectrin alpha chain, non-erythrocytic 1 (SPTAN1) from Capra hircus (Goat).